A 209-amino-acid polypeptide reads, in one-letter code: Uridine kinase (209 aa).

12 to 19 lines the ATP pocket; sequence GGSGSGKT.

Belongs to the uridine kinase family.

It is found in the cytoplasm. It catalyses the reaction uridine + ATP = UMP + ADP + H(+). It carries out the reaction cytidine + ATP = CMP + ADP + H(+). It functions in the pathway pyrimidine metabolism; CTP biosynthesis via salvage pathway; CTP from cytidine: step 1/3. The protein operates within pyrimidine metabolism; UMP biosynthesis via salvage pathway; UMP from uridine: step 1/1. The polypeptide is Uridine kinase (Listeria welshimeri serovar 6b (strain ATCC 35897 / DSM 20650 / CCUG 15529 / CIP 8149 / NCTC 11857 / SLCC 5334 / V8)).